The following is a 173-amino-acid chain: MRPEDKKKVVEDLHVRAEKAKLAILTDFRGLNVAAMSELRKGLRAASAEYQVVKNTLMTLAIEGTDLEVLKDELKGPCAVCLAYEDPVEPTKALTEFAKNNKKFEIKIGVLDGKLVNLDGLKALADLPPREVLLGQIAGTLNSLPTGLVQCLAGVPRKLLYALQAVRDQKEAA.

It belongs to the universal ribosomal protein uL10 family. As to quaternary structure, part of the ribosomal stalk of the 50S ribosomal subunit. The N-terminus interacts with L11 and the large rRNA to form the base of the stalk. The C-terminus forms an elongated spine to which L12 dimers bind in a sequential fashion forming a multimeric L10(L12)X complex.

In terms of biological role, forms part of the ribosomal stalk, playing a central role in the interaction of the ribosome with GTP-bound translation factors. This is Large ribosomal subunit protein uL10 from Desulfatibacillum aliphaticivorans.